Consider the following 270-residue polypeptide: 25S rRNA adenine-N(1) methyltransferase (270 aa).

S-adenosyl-L-methionine is bound by residues Gly-111 and Asp-131.

It belongs to the BMT2 family.

The protein resides in the nucleus. The protein localises to the nucleolus. Functionally, S-adenosyl-L-methionine-dependent methyltransferase that specifically methylates the N(1) position of an adenine present in helix 65 in 25S rRNA. The sequence is that of 25S rRNA adenine-N(1) methyltransferase from Schizosaccharomyces pombe (strain 972 / ATCC 24843) (Fission yeast).